Here is a 150-residue protein sequence, read N- to C-terminus: Large ribosomal subunit protein bL9 (150 aa).

This sequence belongs to the bacterial ribosomal protein bL9 family.

Binds to the 23S rRNA. This is Large ribosomal subunit protein bL9 from Delftia acidovorans (strain DSM 14801 / SPH-1).